Consider the following 77-residue polypeptide: Envelope protein US9 homolog (77 aa).

The Di-leucine internalization motif signature appears at 12-13; it reads LL.

This sequence belongs to the alphaherpesvirinae envelope protein US9 family.

This chain is Envelope protein US9 homolog, found in Chlorocebus aethiops (Green monkey).